Here is a 237-residue protein sequence, read N- to C-terminus: Uridylate kinase (237 aa).

11–14 (KLSG) serves as a coordination point for ATP. A UMP-binding site is contributed by G53. ATP contacts are provided by G54 and R58. Residues D73 and 134-141 (TGNPFFTT) each bind UMP. 3 residues coordinate ATP: T161, Y167, and D170.

This sequence belongs to the UMP kinase family. As to quaternary structure, homohexamer.

The protein resides in the cytoplasm. It catalyses the reaction UMP + ATP = UDP + ADP. It participates in pyrimidine metabolism; CTP biosynthesis via de novo pathway; UDP from UMP (UMPK route): step 1/1. Its activity is regulated as follows. Inhibited by UTP. In terms of biological role, catalyzes the reversible phosphorylation of UMP to UDP. This chain is Uridylate kinase, found in Burkholderia mallei (strain NCTC 10247).